The sequence spans 318 residues: Glutathione synthetase (318 aa).

The region spanning 125–311 (EKLFTAWFPE…ITGKLMDAIE (187 aa)) is the ATP-grasp domain. An ATP-binding site is contributed by 151–208 (FRQEHGDIILKPLDGMGGASIFRVKENDPNVSVIIETLTNHGQNYAMAQTFVPDISNG). Residues Glu282 and Asn284 each contribute to the Mg(2+) site.

This sequence belongs to the prokaryotic GSH synthase family. The cofactor is Mg(2+). Requires Mn(2+) as cofactor.

The catalysed reaction is gamma-L-glutamyl-L-cysteine + glycine + ATP = glutathione + ADP + phosphate + H(+). It functions in the pathway sulfur metabolism; glutathione biosynthesis; glutathione from L-cysteine and L-glutamate: step 2/2. In Vibrio vulnificus (strain YJ016), this protein is Glutathione synthetase.